Consider the following 896-residue polypeptide: Lipoxygenase 2, chloroplastic (896 aa).

The N-terminal 56 residues, 1–56, are a transit peptide targeting the chloroplast; it reads MYCRESLSSLQTLNVAKSLSSLFPKQSALINPISAGRRNNLPRPNLRRRCKVTASR. The PLAT domain maps to 79–199; that stretch reads ITAQEEFLEG…VDPTKRIFFS (121 aa). Residues 175–232 are EIF4E2 binding; sequence GSITFTCESWVAPKSVDPTKRIFFSDKSYLPSQTPEPLKKYRKEELETLQGKNREEVG. Residues 202–896 form the Lipoxygenase domain; it reads SYLPSQTPEP…GMGVPYSISI (695 aa). Residues histidine 554, histidine 559, histidine 746, asparagine 750, and isoleucine 896 each coordinate Fe cation.

Belongs to the lipoxygenase family. In terms of assembly, interacts with EIF4E2. Fe cation serves as cofactor. As to expression, in leaves and inflorescences but not abundant in seeds, roots and stems.

The protein localises to the plastid. Its subcellular location is the chloroplast. The protein resides in the cytoplasm. The enzyme catalyses (9Z,12Z)-octadecadienoate + O2 = (13S)-hydroperoxy-(9Z,11E)-octadecadienoate. It carries out the reaction (9Z,12Z,15Z)-octadecatrienoate + O2 = (13S)-hydroperoxy-(9Z,11E,15Z)-octadecatrienoate. It participates in lipid metabolism; oxylipin biosynthesis. Its function is as follows. 13S-lipoxygenase that can use linolenic acid as substrates. Plant lipoxygenases may be involved in a number of diverse aspects of plant physiology including growth and development, pest resistance, and senescence or responses to wounding. Catalyzes the hydroperoxidation of lipids containing a cis,cis-1,4-pentadiene structure. Required for the wound-induced synthesis of jasmonic acid (JA) in leaves. The chain is Lipoxygenase 2, chloroplastic (LOX2) from Arabidopsis thaliana (Mouse-ear cress).